Consider the following 283-residue polypeptide: 4-diphosphocytidyl-2-C-methyl-D-erythritol kinase (283 aa).

Lysine 10 is an active-site residue. 99–109 (PMGGGLGGGSS) contacts ATP. The active site involves aspartate 141.

This sequence belongs to the GHMP kinase family. IspE subfamily. In terms of assembly, homodimer.

The catalysed reaction is 4-CDP-2-C-methyl-D-erythritol + ATP = 4-CDP-2-C-methyl-D-erythritol 2-phosphate + ADP + H(+). It functions in the pathway isoprenoid biosynthesis; isopentenyl diphosphate biosynthesis via DXP pathway; isopentenyl diphosphate from 1-deoxy-D-xylulose 5-phosphate: step 3/6. Its function is as follows. Catalyzes the phosphorylation of the position 2 hydroxy group of 4-diphosphocytidyl-2C-methyl-D-erythritol. The polypeptide is 4-diphosphocytidyl-2-C-methyl-D-erythritol kinase (Salmonella enteritidis PT4 (strain P125109)).